A 294-amino-acid polypeptide reads, in one-letter code: Signal peptidase I (294 aa).

The interval 1–59 (MTETTDSPSERQPGPAEPELSSRDPDIAGQVFDAAPFDAAPDADSEGDSKAAKTDEPRP) is disordered. At 1-66 (MTETTDSPSE…PRPAKRSTLR (66 aa)) the chain is on the cytoplasmic side. Over residues 47–59 (GDSKAAKTDEPRP) the composition is skewed to basic and acidic residues. The helical transmembrane segment at 67 to 87 (EFAVLAVIAVVLYYVMLTFVA) threads the bilayer. Topologically, residues 88–294 (RPYLIPSESM…VRSVNPQQGR (207 aa)) are extracellular. Catalysis depends on residues Ser-96 and Lys-174.

The protein belongs to the peptidase S26 family.

It localises to the cell membrane. It catalyses the reaction Cleavage of hydrophobic, N-terminal signal or leader sequences from secreted and periplasmic proteins.. The polypeptide is Signal peptidase I (lepB) (Mycobacterium tuberculosis (strain CDC 1551 / Oshkosh)).